A 176-amino-acid polypeptide reads, in one-letter code: Sarcoplasmic calcium-binding protein (176 aa).

T1 bears the N-acetylthreonine mark. 4 EF-hand domains span residues 3–38, 55–90, 91–126, and 127–160; these read YLVSKWKIWYKSLDVNHDGIISIENVEESRNKFTDL, KWWDTYIFLTPGAEISETQFVENLGNSFKKDKAFLA, TMTACFNMIFDVIDTDKDRSIDLNEFIYAFAAFGHE, and NESVVRTAFALLKPDDDNTVPLRTVVDAWISFVT. 4 residues coordinate Ca(2+): D16, N18, D20, and N27. Positions 104, 106, 108, 110, and 115 each coordinate Ca(2+).

Like parvalbumins, SCPs seem to be more abundant in fast contracting muscles, but no functional relationship can be established from this distribution. This chain is Sarcoplasmic calcium-binding protein, found in Mizuhopecten yessoensis (Japanese scallop).